A 593-amino-acid polypeptide reads, in one-letter code: UvrABC system protein C (593 aa).

The region spanning 17–94 (MEPGCYLMKD…IKQYQPRYNI (78 aa)) is the GIY-YIG domain. The UVR domain maps to 199 to 234 (KTILKSLEERMLTASESLDFERAKEYRDLIQHIQNL).

It belongs to the UvrC family. In terms of assembly, interacts with UvrB in an incision complex.

The protein localises to the cytoplasm. The UvrABC repair system catalyzes the recognition and processing of DNA lesions. UvrC both incises the 5' and 3' sides of the lesion. The N-terminal half is responsible for the 3' incision and the C-terminal half is responsible for the 5' incision. In Staphylococcus aureus (strain MRSA252), this protein is UvrABC system protein C.